The chain runs to 181 residues: Interleukin-24 (181 aa).

The signal sequence occupies residues 1-26 (MSWGLQILPCLSLILLLWNQVPGLEG). Cysteines 34 and 81 form a disulfide. An N-linked (GlcNAc...) asparagine glycan is attached at N74. K97 is covalently cross-linked (Glycyl lysine isopeptide (Lys-Gly) (interchain with G-Cter in ubiquitin)).

This sequence belongs to the IL-10 family. Glycosylated. Post-translationally, ubiquitination at Lys-97 promotes proteasomal degradation. Selectively expressed by Th2 cells. Expressed in the liver.

It is found in the secreted. Functionally, multifunctional cytokine mainly produced by T-cells that plays a regulatory role in immune response, tissue homeostasis, host defense, and oncogenesis. Possesses antiviral functions and induces the type I interferon response during influenza infection. Signals through two receptor complexes IL20RA/IL20RB or IL20RB/IL22RA1. In turn, stimulates the JAK1-STAT3 and MAPK pathways and promotes the secretion of pro-inflammatory mediators including IL8 and MMP1. Intracellularly, maintains endoplasmic reticulum homeostasis by restricting the eIF2alpha-CHOP pathway-mediated stress signal. In addition, acts as a quality control mechanism for the ubiquitin proteasome system by alerting the cell to proteasome dysfunction through activation of PKR/EIF2AK2. The protein is Interleukin-24 (Il24) of Mus musculus (Mouse).